The following is an 858-amino-acid chain: Protein translocase subunit SecA (858 aa).

ATP-binding positions include Gln-85, 103–107, and Asp-511; that span reads GEGKT. Zn(2+) contacts are provided by Cys-840, Cys-842, Cys-851, and Cys-852.

Belongs to the SecA family. Monomer and homodimer. Part of the essential Sec protein translocation apparatus which comprises SecA, SecYEG and auxiliary proteins SecDF. Other proteins may also be involved. Requires Zn(2+) as cofactor.

The protein resides in the cell membrane. It is found in the cytoplasm. The catalysed reaction is ATP + H2O + cellular proteinSide 1 = ADP + phosphate + cellular proteinSide 2.. Functionally, part of the Sec protein translocase complex. Interacts with the SecYEG preprotein conducting channel. Has a central role in coupling the hydrolysis of ATP to the transfer of proteins into and across the cell membrane, serving as an ATP-driven molecular motor driving the stepwise translocation of polypeptide chains across the membrane. The polypeptide is Protein translocase subunit SecA (Lachnoclostridium phytofermentans (strain ATCC 700394 / DSM 18823 / ISDg) (Clostridium phytofermentans)).